Here is an 895-residue protein sequence, read N- to C-terminus: Cellulose 1,4-beta-cellobiosidase (895 aa).

A signal peptide spans Met1 to Ala27. In terms of domain architecture, CBM-cenC spans Asn40–Pro199. Positions Pro199–Lys240 are linker. Residues Trp241–Asp815 are catalytic. Catalysis depends on Asp386, which acts as the Nucleophile. Catalysis depends on residues His737, Asp786, and Glu795. Residues Pro828–His894 form the Dockerin domain.

Belongs to the glycosyl hydrolase 9 (cellulase E) family.

It localises to the secreted. It catalyses the reaction Hydrolysis of (1-&gt;4)-beta-D-glucosidic linkages in cellulose and cellotetraose, releasing cellobiose from the non-reducing ends of the chains.. Inhibited by cellobiose. The polypeptide is Cellulose 1,4-beta-cellobiosidase (celK) (Acetivibrio thermocellus (Hungateiclostridium thermocellum)).